The following is a 1793-amino-acid chain: Chitin synthase 5 (1793 aa).

The tract at residues 1-28 (MTNPRMSMYSLASEAPGGNRGTGQQSTQ) is disordered. 5 N-linked (GlcNAc...) asparagine glycosylation sites follow: Asn-70, Asn-164, Asn-638, Asn-664, and Asn-669. 2 consecutive transmembrane segments (helical) span residues 750-770 (VWVFIVWAFTWWIPSPLLRYV) and 786-806 (LVLCFFIFLMNALIVFWIVAF). A Cytochrome b5 heme-binding domain is found at 815–877 (DKAYSQKEVD…GMNLDDYFVA (63 aa)). 3 N-linked (GlcNAc...) asparagine glycosylation sites follow: Asn-897, Asn-1019, and Asn-1023. The helical transmembrane segment at 1056 to 1076 (LLLAFSIMLCAVILLKFVSAL) threads the bilayer. Residue Asn-1421 is glycosylated (N-linked (GlcNAc...) asparagine). 3 helical membrane-spanning segments follow: residues 1452–1472 (LFGTIILPATCVYLGYLIYLV), 1479–1499 (FPLISIIMLAAVYGLQALIFI), and 1507–1527 (IGWMIIYILAFPIYSFVLPIY). Asn-1534 and Asn-1705 each carry an N-linked (GlcNAc...) asparagine glycan. The 57-residue stretch at 1735–1791 (GPDDGMIVEAIRTVLMEVDLDTVTKKQVRALVEQRLQSELVGERRTFMDRQIDHELA) folds into the DEK-C domain.

It belongs to the chitin synthase family. Class V subfamily.

It localises to the cell membrane. It catalyses the reaction [(1-&gt;4)-N-acetyl-beta-D-glucosaminyl](n) + UDP-N-acetyl-alpha-D-glucosamine = [(1-&gt;4)-N-acetyl-beta-D-glucosaminyl](n+1) + UDP + H(+). Functionally, polymerizes chitin, a structural polymer of the cell wall and septum, by transferring the sugar moiety of UDP-GlcNAc to the non-reducing end of the growing chitin polymer. Regulates Germination and Tolerance to Hyperosmotic Stress. Plays a key role in pathogenicity. Likely contributes to post-penetration virulence. The protein is Chitin synthase 5 of Verticillium dahliae (strain VdLs.17 / ATCC MYA-4575 / FGSC 10137) (Verticillium wilt).